The primary structure comprises 195 residues: Glutamyl-tRNA(Gln) amidotransferase subunit C, mitochondrial (195 aa).

The N-terminal 18 residues, 1–18 (MNLSTIGFQVIFKQRLRC), are a transit peptide targeting the mitochondrion.

Belongs to the GatC family. As to quaternary structure, subunit of the heterotrimeric GatCAB amidotransferase (AdT) complex, composed of A, B and C subunits.

It localises to the mitochondrion. The enzyme catalyses L-glutamyl-tRNA(Gln) + L-glutamine + ATP + H2O = L-glutaminyl-tRNA(Gln) + L-glutamate + ADP + phosphate + H(+). Allows the formation of correctly charged Gln-tRNA(Gln) through the transamidation of misacylated Glu-tRNA(Gln) in the mitochondria. The reaction takes place in the presence of glutamine and ATP through an activated gamma-phospho-Glu-tRNA(Gln). This chain is Glutamyl-tRNA(Gln) amidotransferase subunit C, mitochondrial, found in Brugia malayi (Filarial nematode worm).